Reading from the N-terminus, the 474-residue chain is UDP-N-acetylmuramate--L-alanine ligase (474 aa).

122 to 128 is a binding site for ATP; that stretch reads GTHGKTT.

It belongs to the MurCDEF family.

It localises to the cytoplasm. The enzyme catalyses UDP-N-acetyl-alpha-D-muramate + L-alanine + ATP = UDP-N-acetyl-alpha-D-muramoyl-L-alanine + ADP + phosphate + H(+). The protein operates within cell wall biogenesis; peptidoglycan biosynthesis. Its function is as follows. Cell wall formation. The polypeptide is UDP-N-acetylmuramate--L-alanine ligase (Saccharophagus degradans (strain 2-40 / ATCC 43961 / DSM 17024)).